The following is a 355-amino-acid chain: Protein RecA (355 aa).

Glycine 67 to threonine 74 contributes to the ATP binding site. The tract at residues asparagine 331 to phenylalanine 355 is disordered.

The protein belongs to the RecA family.

Its subcellular location is the cytoplasm. Its function is as follows. Can catalyze the hydrolysis of ATP in the presence of single-stranded DNA, the ATP-dependent uptake of single-stranded DNA by duplex DNA, and the ATP-dependent hybridization of homologous single-stranded DNAs. It interacts with LexA causing its activation and leading to its autocatalytic cleavage. This is Protein RecA from Erwinia tasmaniensis (strain DSM 17950 / CFBP 7177 / CIP 109463 / NCPPB 4357 / Et1/99).